The sequence spans 245 residues: MKIDYLTLFPEMFDGVLNHSIMKRAQENNKLQINTVNFRDYAINKHNQVDDYPYGGGQGMVLKPEPVFNAMEDLDVTEQTRVILMCPQGEPFSHQKAVELSKADHIVFICGHYEGYDERIRTHLVTDEISMGDYVLTGGELPAMTMTDAIVRLIPGVLGNEQSHQDDSFSDGLLEFPQYTRPREFKGLTVPDVLLSGNHANIDAWRHEQKLIRTYNKRPDLIEKYPLTNADKQILERYKIGLKKG.

Residues glycine 111 and 131–136 (MGDYVL) contribute to the S-adenosyl-L-methionine site.

The protein belongs to the RNA methyltransferase TrmD family. As to quaternary structure, homodimer.

Its subcellular location is the cytoplasm. The enzyme catalyses guanosine(37) in tRNA + S-adenosyl-L-methionine = N(1)-methylguanosine(37) in tRNA + S-adenosyl-L-homocysteine + H(+). Its function is as follows. Specifically methylates guanosine-37 in various tRNAs. This is tRNA (guanine-N(1)-)-methyltransferase from Staphylococcus aureus (strain USA300).